A 131-amino-acid polypeptide reads, in one-letter code: uncharacterized protein (131 aa).

It is found in the plastid. The protein resides in the chloroplast. This is an uncharacterized protein from Chlorella vulgaris (Green alga).